Reading from the N-terminus, the 154-residue chain is Large-conductance mechanosensitive channel (154 aa).

The next 2 helical transmembrane spans lie at 12 to 32 (GNIV…ALIT) and 71 to 91 (IVLS…FLVV). The disordered stretch occupies residues 129–154 (NGAPSGRHVDTADLTPTPNHEPRADT).

It belongs to the MscL family. Homopentamer.

The protein resides in the cell membrane. In terms of biological role, channel that opens in response to stretch forces in the membrane lipid bilayer. May participate in the regulation of osmotic pressure changes within the cell. This is Large-conductance mechanosensitive channel from Mycobacterium leprae (strain Br4923).